An 86-amino-acid polypeptide reads, in one-letter code: Large ribosomal subunit protein bL27 (86 aa).

Belongs to the bacterial ribosomal protein bL27 family.

This is Large ribosomal subunit protein bL27 from Xanthomonas axonopodis pv. citri (strain 306).